The following is a 55-amino-acid chain: uncharacterized protein (55 aa).

This is an uncharacterized protein from Thermoproteus tenax (TTV1).